A 110-amino-acid polypeptide reads, in one-letter code: RNA polymerase II transcriptional coactivator (110 aa).

The disordered stretch occupies residues 1–50 (MPKTKKKDSSSDSDSGPDDRIKPASKKAKESDAPNSDPKDSGENGATSWT). Residues 17–42 (PDDRIKPASKKAKESDAPNSDPKDSG) show a composition bias toward basic and acidic residues.

The protein belongs to the transcriptional coactivator PC4 family.

The protein resides in the nucleus. General coactivator that functions cooperatively with TAFs and mediates functional interactions between upstream activators and the general transcriptional machinery. Binds single-stranded DNA. Binds specifically to the NssBF element, a short nucleotide sequence of the 1731 retrotransposon, to repress promoter activity. This is RNA polymerase II transcriptional coactivator (Ssb-c31a) from Drosophila melanogaster (Fruit fly).